Reading from the N-terminus, the 371-residue chain is Bifunctional chorismate mutase/prephenate dehydratase (371 aa).

The region spanning 1–92 (MTLKNALLAF…DSVLTQKKWI (92 aa)) is the Chorismate mutase domain. Residues Arg-11, Arg-28, Lys-39, Asp-48, Glu-52, Ser-84, and Gln-88 each coordinate substrate. Positions 104–284 (KISFLGSFGS…NITQFIILAQ (181 aa)) constitute a Prephenate dehydratase domain. A regulatory region spans residues 285–371 (KKTYITNKKT…IKCIKILGCF (87 aa)).

The protein resides in the cytoplasm. It catalyses the reaction chorismate = prephenate. The enzyme catalyses prephenate + H(+) = 3-phenylpyruvate + CO2 + H2O. The protein operates within amino-acid biosynthesis; L-phenylalanine biosynthesis; phenylpyruvate from prephenate: step 1/1. It functions in the pathway metabolic intermediate biosynthesis; prephenate biosynthesis; prephenate from chorismate: step 1/1. In terms of biological role, catalyzes the Claisen rearrangement of chorismate to prephenate and the decarboxylation/dehydration of prephenate to phenylpyruvate. The chain is Bifunctional chorismate mutase/prephenate dehydratase (pheA) from Buchnera aphidicola subsp. Baizongia pistaciae (strain Bp).